The sequence spans 203 residues: MIAYIHGKLLEATDKSCIILTPGGVGYELFLTLSAISTLPESGSDVTFYVHSVIREDAFDLYGFPCFDDREVFRTLISVDRLGPKKALAILSQFGPKDLQDLVFREDVKTLSIVPGIGPKSARQILWSLKDKMETLKSATVRSGACPVEGDRSEFLDALSGLRNLGYGDDEVRDFLKDIFDEEPDLDAGGAIRVALKKISQNK.

The interval 1 to 65 (MIAYIHGKLL…EDAFDLYGFP (65 aa)) is domain I. A domain II region spans residues 66–144 (CFDDREVFRT…TLKSATVRSG (79 aa)). The interval 145 to 155 (ACPVEGDRSEF) is flexible linker. The tract at residues 155–203 (FLDALSGLRNLGYGDDEVRDFLKDIFDEEPDLDAGGAIRVALKKISQNK) is domain III.

It belongs to the RuvA family. Homotetramer. Forms an RuvA(8)-RuvB(12)-Holliday junction (HJ) complex. HJ DNA is sandwiched between 2 RuvA tetramers; dsDNA enters through RuvA and exits via RuvB. An RuvB hexamer assembles on each DNA strand where it exits the tetramer. Each RuvB hexamer is contacted by two RuvA subunits (via domain III) on 2 adjacent RuvB subunits; this complex drives branch migration. In the full resolvosome a probable DNA-RuvA(4)-RuvB(12)-RuvC(2) complex forms which resolves the HJ.

Its subcellular location is the cytoplasm. The RuvA-RuvB-RuvC complex processes Holliday junction (HJ) DNA during genetic recombination and DNA repair, while the RuvA-RuvB complex plays an important role in the rescue of blocked DNA replication forks via replication fork reversal (RFR). RuvA specifically binds to HJ cruciform DNA, conferring on it an open structure. The RuvB hexamer acts as an ATP-dependent pump, pulling dsDNA into and through the RuvAB complex. HJ branch migration allows RuvC to scan DNA until it finds its consensus sequence, where it cleaves and resolves the cruciform DNA. This chain is Holliday junction branch migration complex subunit RuvA, found in Maridesulfovibrio salexigens (strain ATCC 14822 / DSM 2638 / NCIMB 8403 / VKM B-1763) (Desulfovibrio salexigens).